The chain runs to 331 residues: Flotillin-like protein FloA (331 aa).

The next 2 helical transmembrane spans lie at 6–26 (LMILAIVAVAIIVLAVFFTFV) and 28–48 (VMLWISALAAGVKISIFTLVG). Positions 236 to 331 (QTDQAEADKN…KDPSDEDRKS (96 aa)) are required for correct localization. 4 short sequence motifs (EA repeat) span residues 240–242 (AEA), 251–253 (AEE), 278–282 (EAEAE), and 288–290 (AEA). The segment at 312-331 (EMRDSFGKLTKDPSDEDRKS) is disordered.

The protein belongs to the flotillin-like FloA family. Homooligomerizes. Interacts with FloT. Interacts with FtsH midcell. Interacts with PhoR, colocalizes with PhoR in FloA-only membrane rafts.

Its subcellular location is the cell membrane. The protein localises to the membrane raft. Its function is as follows. Found in functional membrane microdomains (FMM) that may be equivalent to eukaryotic membrane rafts. FMMs are highly dynamic and increase in number as cells age. FloA and FloT function is partially redundant; double deletions have marked synthetic phenotypes. Flotillins are thought to be important factors in membrane fluidity, especially during periods of rapid growth in rich media. Whether specific proteins are associated with FMMs is controversial; in one study FloT rafts have been shown to include proteins involved in adaptation to stationary phase, while FloA-FloT rafts include proteins involved in differentiation including sporulation, biofilm formation and DNA uptake competence. Another (more finely resolved) study only showed association of NfeD2 with FloT rafts of all the proteins examined. Involved in spatial organization of membranes, perhaps recruiting proteins to specific membrane regions. Simultaneous overexpression of both FloA and FloT leads to defects in cell division and differentiation, in part caused by stabilization of FtsH and its subsequent increased ability to degrade proteins. Cells make more biofilm, are about half as long, have less EzrA and more frequent Z-rings. This chain is Flotillin-like protein FloA, found in Bacillus subtilis (strain 168).